The chain runs to 550 residues: Acyl-CoA-dependent acyltransferase MAC2 (550 aa).

The protein belongs to the trichothecene O-acetyltransferase family.

The protein operates within secondary metabolite biosynthesis. Acyl-CoA-dependent acyltransferase; part of the gene cluster that mediates the biosynthesis of mannosylerythritol lipids (MELs), surface-active substances that enhance the availability of water-insoluble substrates. Depending on the number of acetyl groups, mannosylerythritol lipids can be differentiated into MEL A (fully acetylated), MEL B and MEL C (monoacetylated at R-6 and R-4, respectively), and the fully deacetylated MEL D. The first step in the pathway is the generation of mannosylerythritol by the glycosyltransferase EMT1 which catalyzes the transfer of GDP-mannose to the C-4 atom of meso-erythritol. This reaction has to be stereospecific, since only mannosyl-D-erythritol is generated. The produced disaccharide is subsequently acylated with fatty acids of various lengths by the acyltransferases MAC1 and MAC2 at positions C-2 and C-3, repectively. The existence of MEL derivatives which carry an acetyl group at C-2 implies that at least MAC1 also accepts acetyl-CoA as a donor. The final step of MEL biosynthesis is the acetylation of the fully acylated mannosylerythritol lipids catalyzed by the acetyl-CoA-dependent acetyltransferase MAT1. MAT1 displays a relaxed regioselectivity and is able to transfer acetylgroups to both positions C-4 and C-6 of the mannosyl moiety. The protein is Acyl-CoA-dependent acyltransferase MAC2 of Pseudozyma antarctica (strain T-34) (Yeast).